The following is a 345-amino-acid chain: Src kinase-associated phosphoprotein 1 (345 aa).

One can recognise a PH domain in the interval K109–K212. A disordered region spans residues E226–E274. Over residues L250–N272 the composition is skewed to acidic residues. Residues F283–D344 enclose the SH3 domain.

The protein belongs to the SKAP family. In terms of assembly, homodimer. In terms of processing, phosphorylated on tyrosines.

The protein localises to the cytoplasm. It is found in the nucleus. The protein resides in the cell membrane. Positively regulates T-cell receptor signaling. Required for optimal conjugation between T-cells and antigen-presenting cells. In Xenopus tropicalis (Western clawed frog), this protein is Src kinase-associated phosphoprotein 1 (skap1).